We begin with the raw amino-acid sequence, 132 residues long: Small ribosomal subunit protein uS8 (132 aa).

This sequence belongs to the universal ribosomal protein uS8 family. Part of the 30S ribosomal subunit. Contacts proteins S5 and S12.

In terms of biological role, one of the primary rRNA binding proteins, it binds directly to 16S rRNA central domain where it helps coordinate assembly of the platform of the 30S subunit. In Caldicellulosiruptor bescii (strain ATCC BAA-1888 / DSM 6725 / KCTC 15123 / Z-1320) (Anaerocellum thermophilum), this protein is Small ribosomal subunit protein uS8.